Consider the following 122-residue polypeptide: MIQPQTYLNVADNSGARKLMCIRVLGAGNSRYGFIGDKIIAVVKDATPNMAVKKSDVVEAVIVRTRHHIRRDSGMTIRFDDNAAVIINKDGNPRGTRVFGPVARELRDKNFTKIVSLAPEVL.

The protein belongs to the universal ribosomal protein uL14 family. Part of the 50S ribosomal subunit. Forms a cluster with proteins L3 and L19. In the 70S ribosome, L14 and L19 interact and together make contacts with the 16S rRNA in bridges B5 and B8.

In terms of biological role, binds to 23S rRNA. Forms part of two intersubunit bridges in the 70S ribosome. In Trichormus variabilis (strain ATCC 29413 / PCC 7937) (Anabaena variabilis), this protein is Large ribosomal subunit protein uL14.